The chain runs to 143 residues: Large ribosomal subunit protein uL13 (143 aa).

The protein belongs to the universal ribosomal protein uL13 family. Part of the 50S ribosomal subunit.

Its function is as follows. This protein is one of the early assembly proteins of the 50S ribosomal subunit, although it is not seen to bind rRNA by itself. It is important during the early stages of 50S assembly. The polypeptide is Large ribosomal subunit protein uL13 (Prochlorococcus marinus (strain MIT 9312)).